We begin with the raw amino-acid sequence, 639 residues long: MCRRAPRSIPLRCAHAPRRDVYQEIPISSFADQTFTAPAQIRNFCIIAHIDHGKSTLADRMLGITGVVADRDMRAQYLDRMDIERERGITIKAQNVRLPWEVNGEKFVLHLIDTPGHVDFTYEVSRALEACEGAILLVDAAQGIEAQTLANLYLALDRDLAIIPVLNKIDLPAADPDRYAGELAHIIGCEPSDVLRVSGKTGAGVRELLDEVVRLVPPPTGDADAPARAMIFDSVYDIYRGVVTYVRVVDGKITPRERIAMMSTGATHELLEVGIVSPDPKPSAGLGVGEVGYLITGVKDVRQSKVGDTVTTARHGAKEALTGYREPRPMVYSGLYPVDGSDYPVLREALDKLQLNDAALTYEPETSVALGFGFRCGFLGLLHMEITRERLEREFNLDLISTAPNVVYRVEKDDGTEIVVTNPSDWPEGKVRTVYEPVVKTTVIAPSEFIGTIMELCQSRRGELGGMDYLSPERVELRYTMPLGEIIFDFFDSLKSRTRGYASLDYEEAGEQEADLVKVDILLQGEAVDAFSAIVHKDGASAYGNKMTTKLKELIPRQQFEVPVQAAVGSRIIARENIRAIRKDVLSKCYGGDITRKRKLLEKQKEGKKRMKTIGRVDVPQEAFVAALSTDAAGDKPKK.

One can recognise a tr-type G domain in the interval 39–220 (AQIRNFCIIA…EVVRLVPPPT (182 aa)). Residues 51–56 (DHGKST) and 167–170 (NKID) each bind GTP.

This sequence belongs to the TRAFAC class translation factor GTPase superfamily. Classic translation factor GTPase family. LepA subfamily.

The protein resides in the cell membrane. It carries out the reaction GTP + H2O = GDP + phosphate + H(+). Required for accurate and efficient protein synthesis under certain stress conditions. May act as a fidelity factor of the translation reaction, by catalyzing a one-codon backward translocation of tRNAs on improperly translocated ribosomes. Back-translocation proceeds from a post-translocation (POST) complex to a pre-translocation (PRE) complex, thus giving elongation factor G a second chance to translocate the tRNAs correctly. Binds to ribosomes in a GTP-dependent manner. This chain is Elongation factor 4, found in Mycobacterium sp. (strain JLS).